A 755-amino-acid chain; its full sequence is Exocyst complex component 3 (755 aa).

N6-acetyllysine is present on Lys-38.

It belongs to the SEC6 family. The exocyst complex is composed of EXOC1, EXOC2, EXOC3, EXOC4, EXOC5, EXOC6, EXOC7 and EXOC8. Interacts with EXOC3L1. Interacts with BIRC6/bruce. Interacts with MYRIP. Interacts with SLC6A9.

The protein localises to the cytoplasm. It localises to the perinuclear region. It is found in the cell projection. Its subcellular location is the growth cone. The protein resides in the midbody. The protein localises to the golgi apparatus. It localises to the neuron projection. Component of the exocyst complex involved in the docking of exocytic vesicles with fusion sites on the plasma membrane. This Mus musculus (Mouse) protein is Exocyst complex component 3 (Exoc3).